Consider the following 218-residue polypeptide: MDQDVLKKQVAEAALRFVPEGDIIGVGTGSTANFFIDALATLKDRIKGTVASSEATAERLKQHGIEVFSLNDVGSLSVYVDGADEVNQHREMIKGGGGALTREKIVAAMAKEFICIVDGSKQVNRLGAFPLPIEVIPMARSYVARKLVALGGQPQYREGFLTDNGNIILDVHNLDISNPIELETTLNNIVGVVTNGLFAKRPADIVLVGEKSGAVNQY.

Substrate contacts are provided by residues 28–31, 81–84, and 94–97; these read TGST, DGAD, and KGGG. The active-site Proton acceptor is the Glu103. Lys121 serves as a coordination point for substrate.

Belongs to the ribose 5-phosphate isomerase family. Homodimer.

It carries out the reaction aldehydo-D-ribose 5-phosphate = D-ribulose 5-phosphate. The protein operates within carbohydrate degradation; pentose phosphate pathway; D-ribose 5-phosphate from D-ribulose 5-phosphate (non-oxidative stage): step 1/1. Catalyzes the reversible conversion of ribose-5-phosphate to ribulose 5-phosphate. This chain is Ribose-5-phosphate isomerase A, found in Alcanivorax borkumensis (strain ATCC 700651 / DSM 11573 / NCIMB 13689 / SK2).